The chain runs to 181 residues: MSSFHATTIFAVQHKGRSAMSGDGQVTFGQAVVMKHTARKVRKLFNGKVLAGFAGSVADAFTLFEKFEAKLEEYNGNLKRAAVELAKEWRSDKVLRKLEAMLIVMNQDTLLLVSGTGEVIEPDDGILAIGSGGNYALAAGRALKKHAGESMSASEIARAALETAGEICVYTNDQIILEELE.

The active site involves S2. 3 residues coordinate Na(+): G165, C168, and T171.

A double ring-shaped homohexamer of ClpQ is capped on each side by a ring-shaped ClpY homohexamer. The assembly of the ClpQ/ClpY complex is dependent on binding of ATP.

The protein localises to the cytoplasm. Its function is as follows. Protease subunit of a proteasome-like degradation complex. The chain is ATP-dependent protease subunit ClpQ (clpQ) from Bacillus subtilis (strain 168).